The chain runs to 666 residues: Transketolase (666 aa).

Residue H28 participates in substrate binding. Residues H68 and 116–118 (GPL) each bind thiamine diphosphate. Residue D157 participates in Mg(2+) binding. Residues G158 and N187 each contribute to the thiamine diphosphate site. 2 residues coordinate Mg(2+): N187 and I189. Substrate is bound by residues H262, R356, and S383. H262 lines the thiamine diphosphate pocket. E410 (proton donor) is an active-site residue. F436 lines the thiamine diphosphate pocket. The substrate site is built by H460, D468, and R519.

The protein belongs to the transketolase family. Homodimer. Mg(2+) serves as cofactor. It depends on Ca(2+) as a cofactor. Requires Mn(2+) as cofactor. The cofactor is Co(2+). Thiamine diphosphate is required as a cofactor.

The catalysed reaction is D-sedoheptulose 7-phosphate + D-glyceraldehyde 3-phosphate = aldehydo-D-ribose 5-phosphate + D-xylulose 5-phosphate. Catalyzes the transfer of a two-carbon ketol group from a ketose donor to an aldose acceptor, via a covalent intermediate with the cofactor thiamine pyrophosphate. This Halalkalibacterium halodurans (strain ATCC BAA-125 / DSM 18197 / FERM 7344 / JCM 9153 / C-125) (Bacillus halodurans) protein is Transketolase (tkt).